A 320-amino-acid chain; its full sequence is ATP-dependent 6-phosphofructokinase (320 aa).

Position 12 (Gly-12) interacts with ATP. Residues 22–26 and 55–60 contribute to the ADP site; these read RGVVR and RYSVSD. ATP contacts are provided by residues 73-74 and 103-106; these read RF and GDGS. Position 104 (Asp-104) interacts with Mg(2+). 126 to 128 lines the substrate pocket; the sequence is TID. Asp-128 serves as the catalytic Proton acceptor. An ADP-binding site is contributed by Arg-155. Substrate is bound by residues Arg-163 and 170-172; that span reads MGR. Residues 186 to 188, Lys-212, and 214 to 216 contribute to the ADP site; these read GCE and KKH. Residues Glu-223, Arg-244, and 250 to 253 each bind substrate; that span reads HIQR.

This sequence belongs to the phosphofructokinase type A (PFKA) family. ATP-dependent PFK group I subfamily. Prokaryotic clade 'B1' sub-subfamily. Homotetramer. It depends on Mg(2+) as a cofactor.

The protein resides in the cytoplasm. The catalysed reaction is beta-D-fructose 6-phosphate + ATP = beta-D-fructose 1,6-bisphosphate + ADP + H(+). The protein operates within carbohydrate degradation; glycolysis; D-glyceraldehyde 3-phosphate and glycerone phosphate from D-glucose: step 3/4. Its activity is regulated as follows. Allosterically activated by ADP and other diphosphonucleosides, and allosterically inhibited by phosphoenolpyruvate. In terms of biological role, catalyzes the phosphorylation of D-fructose 6-phosphate to fructose 1,6-bisphosphate by ATP, the first committing step of glycolysis. This is ATP-dependent 6-phosphofructokinase from Sodalis glossinidius (strain morsitans).